Consider the following 70-residue polypeptide: NADH dehydrogenase [ubiquinone] 1 alpha subcomplex subunit 1 (70 aa).

Residues 1 to 21 (MWFEVLPGIAVMGVCLFIPGM) form a helical membrane-spanning segment.

The protein belongs to the complex I NDUFA1 subunit family. As to quaternary structure, complex I is composed of 45 different subunits.

It is found in the mitochondrion inner membrane. In terms of biological role, accessory subunit of the mitochondrial membrane respiratory chain NADH dehydrogenase (Complex I), that is believed not to be involved in catalysis. Complex I functions in the transfer of electrons from NADH to the respiratory chain. The immediate electron acceptor for the enzyme is believed to be ubiquinone. The polypeptide is NADH dehydrogenase [ubiquinone] 1 alpha subcomplex subunit 1 (NDUFA1) (Bos taurus (Bovine)).